A 471-amino-acid chain; its full sequence is ATP synthase subunit beta (471 aa).

157–164 (GGAGVGKT) provides a ligand contact to ATP.

This sequence belongs to the ATPase alpha/beta chains family. In terms of assembly, F-type ATPases have 2 components, CF(1) - the catalytic core - and CF(0) - the membrane proton channel. CF(1) has five subunits: alpha(3), beta(3), gamma(1), delta(1), epsilon(1). CF(0) has three main subunits: a(1), b(2) and c(9-12). The alpha and beta chains form an alternating ring which encloses part of the gamma chain. CF(1) is attached to CF(0) by a central stalk formed by the gamma and epsilon chains, while a peripheral stalk is formed by the delta and b chains.

It is found in the cell inner membrane. It carries out the reaction ATP + H2O + 4 H(+)(in) = ADP + phosphate + 5 H(+)(out). Produces ATP from ADP in the presence of a proton gradient across the membrane. The catalytic sites are hosted primarily by the beta subunits. The chain is ATP synthase subunit beta from Trichlorobacter lovleyi (strain ATCC BAA-1151 / DSM 17278 / SZ) (Geobacter lovleyi).